We begin with the raw amino-acid sequence, 457 residues long: Exodeoxyribonuclease 7 large subunit (457 aa).

It belongs to the XseA family. In terms of assembly, heterooligomer composed of large and small subunits.

Its subcellular location is the cytoplasm. The enzyme catalyses Exonucleolytic cleavage in either 5'- to 3'- or 3'- to 5'-direction to yield nucleoside 5'-phosphates.. Functionally, bidirectionally degrades single-stranded DNA into large acid-insoluble oligonucleotides, which are then degraded further into small acid-soluble oligonucleotides. The chain is Exodeoxyribonuclease 7 large subunit from Citrobacter koseri (strain ATCC BAA-895 / CDC 4225-83 / SGSC4696).